The sequence spans 430 residues: Evolutionarily conserved signaling intermediate in Toll pathway, mitochondrial (430 aa).

A mitochondrion-targeting transit peptide spans methionine 1–histidine 48. Residues leucine 41–threonine 66 are disordered. Residues proline 47–serine 56 show a composition bias toward polar residues. Lysine 372 participates in a covalent cross-link: Glycyl lysine isopeptide (Lys-Gly) (interchain with G-Cter in ubiquitin). The tract at residues leucine 400 to serine 430 is disordered. The segment covering proline 411–aspartate 420 has biased composition (acidic residues).

It belongs to the ECSIT family. Interacts with MAP3K1, SMAD4 and TRAF6. Interacts with SMAD1 only after BMP4-treatment. Part of the mitochondrial complex I assembly/MCIA complex that comprises at least the core subunits TMEM126B, NDUFAF1, ECSIT and ACAD9 and complement subunits such as COA1 and TMEM186. Interacts with NDUFAF1. Interacts with ACAD9. Interacts with TRIM59. Interacts with TMEM70 and TMEM242. Interacts (when ubiquitinated) with NF-kappa-B subunits RELA and NFKB1. Interacts with RIGI, IFIT1 and MAVS; these interactions promote RLR-mediated type I IFN induction. Interacts with SQSTM1; this interaction inhibits TLR4 signaling via functional regulation of the TRAF6-ECSIT complex. Interacts with cereblon/CRBN; this interaction inhibits the ubiquitination of ECSIT. Ubiquitinated on Lys-372; leading to translocation in the nucleus together with RELA and NFKB1 and expression of NF-kappa-B-dependent genes.

It localises to the cytoplasm. Its subcellular location is the nucleus. The protein localises to the mitochondrion. Its function is as follows. Adapter protein that plays a role in different signaling pathways including TLRs and IL-1 pathways or innate antiviral induction signaling. Plays a role in the activation of NF-kappa-B by forming a signal complex with TRAF6 and TAK1/MAP3K7 to activate TAK1/MAP3K7 leading to activation of IKKs. Once ubiquitinated, interacts with the dissociated RELA and NFKB1 proteins and translocates to the nucleus where it induces NF-kappa-B-dependent gene expression. Plays a role in innate antiviral immune response by bridging the pattern recognition receptors RIGI and MDA5/IFIT1 to the MAVS complex at the mitochondrion. Promotes proteolytic activation of MAP3K1. Involved in the BMP signaling pathway. Required for normal embryonic development. Functionally, as part of the MCIA complex, involved in the assembly of the mitochondrial complex I. The polypeptide is Evolutionarily conserved signaling intermediate in Toll pathway, mitochondrial (Macaca fascicularis (Crab-eating macaque)).